Consider the following 334-residue polypeptide: Ventral anterior homeobox 1 (334 aa).

Residues Met-1–Gly-34 are compositionally biased toward basic and acidic residues. Positions Met-1–Ala-41 are disordered. Positions Pro-100–Gln-159 form a DNA-binding region, homeobox. Disordered regions lie at residues Pro-234–Ala-263 and Ser-314–Asp-334. The span at Asn-323–Asp-334 shows a compositional bias: basic and acidic residues.

This sequence belongs to the EMX homeobox family.

The protein localises to the nucleus. Its function is as follows. Transcription factor that may function in dorsoventral specification of the forebrain. Required for axon guidance and major tract formation in the developing forebrain. May contribute to the differentiation of the neuroretina, pigmented epithelium and optic stalk. The polypeptide is Ventral anterior homeobox 1 (VAX1) (Homo sapiens (Human)).